Reading from the N-terminus, the 296-residue chain is NADH-cytochrome b5 reductase 1 (296 aa).

Residues 11–31 traverse the membrane as a helical segment; that stretch reads LSAVLVKFAPFAVAVIAILAA. The FAD-binding FR-type domain occupies 47–152; it reads SEFQNFVLKE…RGPKGAMVYT (106 aa). FAD contacts are provided by residues 132 to 147 and 158 to 195; these read TTLK…GPKG and HIGM…KIDL.

This sequence belongs to the flavoprotein pyridine nucleotide cytochrome reductase family. In terms of assembly, monomer. Component of the 2-(3-amino-3-carboxypropyl)histidine synthase complex composed of dph1, dph2, dph3 and a NADH-dependent reductase, predominantly cbr1. FAD is required as a cofactor.

Its subcellular location is the mitochondrion outer membrane. It carries out the reaction 2 Fe(III)-[cytochrome b5] + NADH = 2 Fe(II)-[cytochrome b5] + NAD(+) + H(+). The catalysed reaction is 2 Fe(3+)-[Dph3] + NADH = 2 Fe(2+)-[Dph3] + NAD(+) + H(+). The protein operates within protein modification; peptidyl-diphthamide biosynthesis. In terms of biological role, NADH-dependent reductase for dph3 and cytochrome b5. Required for the first step of diphthamide biosynthesis, a post-translational modification of histidine which occurs in elongation factor 2. Dph1 and dph2 transfer a 3-amino-3-carboxypropyl (ACP) group from S-adenosyl-L-methionine (SAM) to a histidine residue, the reaction is assisted by a reduction system comprising dph3 and a NADH-dependent reductase, predominantly cbr1. By reducing dph3, also involved in the formation of the tRNA wobble base modification mcm5s 2U (5-methoxycarbonylmethyl-2-thiouridine), mediated by the elongator complex. The cytochrome b5/NADH cytochrome b5 reductase electron transfer system supports the catalytic activity of several sterol biosynthetic enzymes. This chain is NADH-cytochrome b5 reductase 1 (cbr1), found in Aspergillus terreus (strain NIH 2624 / FGSC A1156).